A 91-amino-acid chain; its full sequence is Small ribosomal subunit protein bS16 (91 aa).

Belongs to the bacterial ribosomal protein bS16 family.

The chain is Small ribosomal subunit protein bS16 from Ligilactobacillus salivarius (strain UCC118) (Lactobacillus salivarius).